The primary structure comprises 352 residues: Putative [LysW]-L-2-aminoadipate 6-phosphate reductase (352 aa).

NADP(+) is bound at residue 11 to 14; it reads SGYT. Residue C148 is part of the active site. N319 lines the NADP(+) pocket.

Belongs to the NAGSA dehydrogenase family. Type 1 subfamily. LysY sub-subfamily.

The protein localises to the cytoplasm. The catalysed reaction is [amino-group carrier protein]-C-terminal-N-(1-carboxy-5-oxopentan-1-yl)-L-glutamine + phosphate + NADP(+) = [amino-group carrier protein]-C-terminal-N-(1-carboxy-5-phosphooxy-5-oxopentan-1-yl)-L-glutamine + NADPH + H(+). The protein operates within amino-acid biosynthesis; L-lysine biosynthesis via AAA pathway; L-lysine from L-alpha-aminoadipate (Thermus route): step 3/5. Its function is as follows. Catalyzes the NADPH-dependent reduction of [LysW]-aminoadipate 6-phosphate to yield [LysW]-aminoadipate 6-semialdehyde. In Thermomicrobium roseum (strain ATCC 27502 / DSM 5159 / P-2), this protein is Putative [LysW]-L-2-aminoadipate 6-phosphate reductase.